The chain runs to 25 residues: Caerin-1.10 (25 aa).

A Leucine amide modification is found at leucine 25.

It belongs to the frog skin active peptide (FSAP) family. Caerin subfamily. Expressed by the skin dorsal glands.

The protein resides in the secreted. Functionally, antibacterial peptide with wide spectrum of activity. The polypeptide is Caerin-1.10 (Litoria rothii (Roth's tree frog)).